The chain runs to 179 residues: Large ribosomal subunit protein uL5 (179 aa).

This sequence belongs to the universal ribosomal protein uL5 family. As to quaternary structure, part of the 50S ribosomal subunit; part of the 5S rRNA/L5/L18/L25 subcomplex. Contacts the 5S rRNA and the P site tRNA. Forms a bridge to the 30S subunit in the 70S ribosome.

In terms of biological role, this is one of the proteins that bind and probably mediate the attachment of the 5S RNA into the large ribosomal subunit, where it forms part of the central protuberance. In the 70S ribosome it contacts protein S13 of the 30S subunit (bridge B1b), connecting the 2 subunits; this bridge is implicated in subunit movement. Contacts the P site tRNA; the 5S rRNA and some of its associated proteins might help stabilize positioning of ribosome-bound tRNAs. This chain is Large ribosomal subunit protein uL5, found in Citrifermentans bemidjiense (strain ATCC BAA-1014 / DSM 16622 / JCM 12645 / Bem) (Geobacter bemidjiensis).